The chain runs to 210 residues: Guanylate kinase (210 aa).

The region spanning 6 to 186 (GVILVLSSPS…TADRISNILR (181 aa)) is the Guanylate kinase-like domain. 13–20 (SPSGCGKT) contributes to the ATP binding site.

This sequence belongs to the guanylate kinase family.

The protein localises to the cytoplasm. It catalyses the reaction GMP + ATP = GDP + ADP. Functionally, essential for recycling GMP and indirectly, cGMP. In Anaplasma phagocytophilum (strain HZ), this protein is Guanylate kinase.